The sequence spans 108 residues: uncharacterized protein (108 aa).

The helical transmembrane segment at 59 to 81 (NIVIILWKIMVVIISSIIHRTYI) threads the bilayer.

The protein localises to the membrane. This is an uncharacterized protein from Rickettsia conorii (strain ATCC VR-613 / Malish 7).